The following is a 156-amino-acid chain: Small ribosomal subunit protein uS7 (156 aa).

It belongs to the universal ribosomal protein uS7 family. As to quaternary structure, part of the 30S ribosomal subunit. Contacts proteins S9 and S11.

Functionally, one of the primary rRNA binding proteins, it binds directly to 16S rRNA where it nucleates assembly of the head domain of the 30S subunit. Is located at the subunit interface close to the decoding center, probably blocks exit of the E-site tRNA. The sequence is that of Small ribosomal subunit protein uS7 from Bacillus mycoides (strain KBAB4) (Bacillus weihenstephanensis).